The sequence spans 231 residues: LexA repressor (231 aa).

The H-T-H motif DNA-binding region spans 26 to 46 (FDEMKDALDLRSKSGIHRLIT). Catalysis depends on for autocatalytic cleavage activity residues serine 152 and lysine 190.

The protein belongs to the peptidase S24 family. As to quaternary structure, homodimer.

The catalysed reaction is Hydrolysis of Ala-|-Gly bond in repressor LexA.. Functionally, represses a number of genes involved in the response to DNA damage (SOS response), including recA and lexA. In the presence of single-stranded DNA, RecA interacts with LexA causing an autocatalytic cleavage which disrupts the DNA-binding part of LexA, leading to derepression of the SOS regulon and eventually DNA repair. The polypeptide is LexA repressor (Dinoroseobacter shibae (strain DSM 16493 / NCIMB 14021 / DFL 12)).